Reading from the N-terminus, the 147-residue chain is Large ribosomal subunit protein bL9 (147 aa).

It belongs to the bacterial ribosomal protein bL9 family.

Functionally, binds to the 23S rRNA. In Thermoanaerobacter pseudethanolicus (strain ATCC 33223 / 39E) (Clostridium thermohydrosulfuricum), this protein is Large ribosomal subunit protein bL9.